A 467-amino-acid chain; its full sequence is Mothers against decapentaplegic homolog 2 (467 aa).

Serine 2 bears the N-acetylserine mark. At threonine 8 the chain carries Phosphothreonine; by MAPK3. Positions 10–176 constitute an MH1 domain; it reads PVVKRLLGWK…YQRVETPVLP (167 aa). The residue at position 19 (lysine 19) is an N6-acetyllysine. Zn(2+) is bound by residues cysteine 74, cysteine 149, cysteine 161, and histidine 166. Residues 207–217 show a composition bias toward polar residues; that stretch reads PAGIEPQSNYI. Positions 207 to 251 are disordered; that stretch reads PAGIEPQSNYIPETPPPGYISEDGETSDQQLNQSMDTGSPAELSP. A Phosphothreonine modification is found at threonine 220. The PY-motif signature appears at 221 to 225; it reads PPPGY. The span at 233-243 shows a compositional bias: polar residues; sequence SDQQLNQSMDT. Position 240 is a phosphoserine; by CAMK2 (serine 240). Phosphoserine occurs at positions 245, 250, 255, 458, 460, and 464. The 194-residue stretch at 274 to 467 folds into the MH2 domain; sequence WCSIAYYELN…SPSVRCSSMS (194 aa). 2 positions are modified to phosphoserine; by TGFBR1: serine 465 and serine 467.

The protein belongs to the dwarfin/SMAD family. As to quaternary structure, monomer; in the absence of TGF-beta. Heterodimer; in the presence of TGF-beta. Forms a heterodimer with co-SMAD, SMAD4, in the nucleus to form the transactivation complex SMAD2/SMAD4. Found in a complex with SMAD3 and TRIM33 upon addition of TGF-beta. Identified in a complex that contains at least ZNF451, SMAD2, SMAD3 and SMAD4. Interacts (via the MH2 domain) with ZFYVE9; may form trimers with the SMAD4 co-SMAD. Interacts with TAZ/WWRT1. Interacts with FOXH1. Interacts with SNW1. Interacts with CREB-binding protein (CBP) and EP300. Interacts with SNON. Interacts with ALK4/ACVR1B. Interacts with SKOR1. Interacts with SKOR2. Interacts with PRDM16. Interacts (via MH2 domain) with LEMD3. Interacts with RBPMS. Interacts with WWP1. Interacts (dephosphorylated form, via the MH1 and MH2 domains) with RANBP3 (via its C-terminal R domain); the interaction results in the export of dephosphorylated SMAD3 out of the nucleus and termination of the TGF-beta signaling. Interacts with PDPK1 (via PH domain). Interacts with DAB2; the interactions are enhanced upon TGF-beta stimulation. Interacts with USP15. Interacts with PPP5C. Interacts with LDLRAD4 (via the SMAD interaction motif). Interacts (via MH2 domain) with PMEPA1 (via the SMAD interaction motif). Interacts with ZFHX3. Interacts with ZNF451. Interacts with SMURF2 when phosphorylated on Ser-465/467. Interacts with PPM1A. Interacts with TGF-beta. Interacts with TGFBR1. Interacts with TGIF. Interacts with SMAD3 and TRIM33. Interacts with ZNF580. Interacts with NEDD4L in response to TGF-beta. Interacts with HGS. Interacts with AIP1. Interacts with WWP1. Interacts with PML. Interacts weakly with ZNF8. Interacts (when phosphorylated) with RNF111; RNF111 acts as an enhancer of the transcriptional responses by mediating ubiquitination and degradation of SMAD2 inhibitors. Interacts with YAP1 (when phosphorylated at 'Ser-127'). Interacts when phosphorylated with IPO7; the interaction facilitates translocation of SMAD2 to the nucleus. Interacts with MTMR4; negatively regulates TGF-beta signaling through SMAD2 dephosphorylation and retention in endosomes. Phosphorylated on one or several of Thr-220, Ser-245, Ser-250, and Ser-255. In response to TGF-beta, phosphorylated on Ser-465/467 by TGF-beta and activin type 1 receptor kinases. TGF-beta-induced Ser-465/467 phosphorylation declines progressively in a KMT5A-dependent manner. Able to interact with SMURF2 when phosphorylated on Ser-465/467, recruiting other proteins, such as SNON, for degradation. In response to decorin, the naturally occurring inhibitor of TGF-beta signaling, phosphorylated on Ser-240 by CaMK2. Phosphorylated by MAPK3 upon EGF stimulation; which increases transcriptional activity and stability, and is blocked by calmodulin. Phosphorylated by PDPK1. Post-translationally, in response to TGF-beta, ubiquitinated by NEDD4L; which promotes its degradation. Monoubiquitinated, leading to prevent DNA-binding. Deubiquitination by USP15 alleviates inhibition and promotes activation of TGF-beta target genes. Ubiquitinated by RNF111, leading to its degradation: only SMAD2 proteins that are 'in use' are targeted by RNF111, RNF111 playing a key role in activating SMAD2 and regulating its turnover. In terms of processing, acetylated on Lys-19 by coactivators in response to TGF-beta signaling, which increases transcriptional activity. Isoform short: Acetylation increases DNA binding activity in vitro and enhances its association with target promoters in vivo. Acetylation in the nucleus by EP300 is enhanced by TGF-beta. Expressed at high levels in skeletal muscle, endothelial cells, heart and placenta.

Its subcellular location is the cytoplasm. The protein resides in the nucleus. In terms of biological role, receptor-regulated SMAD (R-SMAD) that is an intracellular signal transducer and transcriptional modulator activated by TGF-beta (transforming growth factor) and activin type 1 receptor kinases. Binds the TRE element in the promoter region of many genes that are regulated by TGF-beta and, on formation of the SMAD2/SMAD4 complex, activates transcription. Promotes TGFB1-mediated transcription of odontoblastic differentiation genes in dental papilla cells. Positively regulates PDPK1 kinase activity by stimulating its dissociation from the 14-3-3 protein YWHAQ which acts as a negative regulator. May act as a tumor suppressor in colorectal carcinoma. This Homo sapiens (Human) protein is Mothers against decapentaplegic homolog 2 (SMAD2).